The chain runs to 92 residues: Long neurotoxin 1 (92 aa).

Positions M1–T21 are cleaved as a signal peptide. Intrachain disulfides connect C24-C41, C34-C62, C47-C51, C66-C77, and C78-C83.

The protein belongs to the three-finger toxin family. Long-chain subfamily. Type II alpha-neurotoxin sub-subfamily. In terms of tissue distribution, expressed by the venom gland.

It is found in the secreted. Functionally, binds with high affinity to muscular (alpha-1/CHRNA1) and neuronal (alpha-7/CHRNA7) nicotinic acetylcholine receptor (nAChR) and inhibits acetylcholine from binding to the receptor, thereby impairing neuromuscular and neuronal transmission. The polypeptide is Long neurotoxin 1 (Hydrophis hardwickii (Hardwick's spine-bellied seasnake)).